The primary structure comprises 103 residues: MTQPDMSQILAQAQQMQAQLQAAQQEILATTVVGNAGNGLVTVTMAGNGEVSAVTVDPKVVDPEDVETLQDLLLGAFKDAHNKVANVAEEKMGPLSQGMGGLF.

It belongs to the YbaB/EbfC family. As to quaternary structure, homodimer.

The protein localises to the cytoplasm. It localises to the nucleoid. Its function is as follows. Binds to DNA and alters its conformation. May be involved in regulation of gene expression, nucleoid organization and DNA protection. The chain is Nucleoid-associated protein Cgl0243/cg0297 from Corynebacterium glutamicum (strain ATCC 13032 / DSM 20300 / JCM 1318 / BCRC 11384 / CCUG 27702 / LMG 3730 / NBRC 12168 / NCIMB 10025 / NRRL B-2784 / 534).